The primary structure comprises 65 residues: Temporin-SN1 (65 aa).

Residues 1 to 22 form the signal peptide; it reads MFTTKKSLLLLFFLGTINLSLC. Residues 23-44 constitute a propeptide, removed in mature form; sequence QEERNAEEERRDGDDEGGVEVQ. At Lys-65 the chain carries Lysine amide.

The protein belongs to the frog skin active peptide (FSAP) family. Temporin subfamily. In terms of tissue distribution, expressed by the skin glands.

The protein resides in the secreted. Its function is as follows. Antimicrobial peptide. Active against a variety of Gram-positive bacterial strains. Not active against Gram-negative bacteria and against fungi. Shows hemolytic activity against human erythrocytes. The protein is Temporin-SN1 of Sylvirana spinulosa (Fine-spined frog).